A 169-amino-acid chain; its full sequence is Der GTPase-activating protein YihI (169 aa).

Disordered regions lie at residues 1-100 and 144-169; these read MKPS…AELE and GLSY…LRGN. Over residues 10 to 19 the composition is skewed to basic residues; that stretch reads SKGHAKARRK. Positions 20 to 30 are enriched in basic and acidic residues; sequence TREELDQEARD. The segment covering 31 to 40 has biased composition (basic residues); the sequence is RKRQKKRRGH. Residues 49–58 are compositionally biased toward polar residues; the sequence is GNTTSGSKGQ. A compositionally biased stretch (acidic residues) spans 147–159; that stretch reads YDDDEEEEEDEKQ. Residues 160 to 169 show a composition bias toward basic and acidic residues; it reads EDMMRLLRGN.

Belongs to the YihI family. In terms of assembly, interacts with Der.

Functionally, a GTPase-activating protein (GAP) that modifies Der/EngA GTPase function. May play a role in ribosome biogenesis. The chain is Der GTPase-activating protein YihI from Escherichia coli O6:H1 (strain CFT073 / ATCC 700928 / UPEC).